The following is an 850-amino-acid chain: Ras GTPase-activating protein 2 (850 aa).

The segment covering 1-24 has biased composition (low complexity); the sequence is MAAAAPAAAAASSEAPAASATAEP. Residues 1–32 form a disordered region; it reads MAAAAPAAAAASSEAPAASATAEPEAGDQDSR. At Ala2 the chain carries N-acetylalanine. C2 domains are found at residues 20 to 138 and 149 to 289; these read ATAE…ETWF and VQGK…QAWY. Residues 372–589 enclose the Ras-GAP domain; the sequence is DKLVPFATAV…IAVKKFLDEI (218 aa). Position 555 is a phosphoserine (Ser555). The PH domain maps to 604-706; that stretch reads VHLKEGEMYK…WIDVLCRVSR (103 aa). Residues 708–744 form a Btk-type zinc finger; the sequence is NQNRLSFYHPSVYLNGNWLCCQETGENTLGCKPCTAG. Zn(2+) contacts are provided by His716, Cys727, Cys728, and Cys738. Positions 825-850 are disordered; that stretch reads HEKYRKKRSSSAKYGSKENPIVGKAS.

The protein localises to the cytoplasm. It is found in the perinuclear region. Functionally, inhibitory regulator of the Ras-cyclic AMP pathway. Binds inositol tetrakisphosphate (IP4). The protein is Ras GTPase-activating protein 2 (RASA2) of Homo sapiens (Human).